The primary structure comprises 405 residues: 4-hydroxy-3-methylbut-2-enyl diphosphate reductase (405 aa).

Position 66 (Cys66) interacts with [4Fe-4S] cluster. A (2E)-4-hydroxy-3-methylbut-2-enyl diphosphate-binding site is contributed by His96. His96 is a dimethylallyl diphosphate binding site. Residue His96 participates in isopentenyl diphosphate binding. Cys157 contributes to the [4Fe-4S] cluster binding site. His185 contacts (2E)-4-hydroxy-3-methylbut-2-enyl diphosphate. His185 contacts dimethylallyl diphosphate. Residue His185 participates in isopentenyl diphosphate binding. Glu187 functions as the Proton donor in the catalytic mechanism. Thr250 is a (2E)-4-hydroxy-3-methylbut-2-enyl diphosphate binding site. Residue Cys288 coordinates [4Fe-4S] cluster. (2E)-4-hydroxy-3-methylbut-2-enyl diphosphate is bound by residues Ser317, Ser318, Asn319, and Ser380. Dimethylallyl diphosphate is bound by residues Ser317, Ser318, Asn319, and Ser380. Isopentenyl diphosphate is bound by residues Ser317, Ser318, Asn319, and Ser380.

The protein belongs to the IspH family. [4Fe-4S] cluster is required as a cofactor.

It catalyses the reaction isopentenyl diphosphate + 2 oxidized [2Fe-2S]-[ferredoxin] + H2O = (2E)-4-hydroxy-3-methylbut-2-enyl diphosphate + 2 reduced [2Fe-2S]-[ferredoxin] + 2 H(+). It carries out the reaction dimethylallyl diphosphate + 2 oxidized [2Fe-2S]-[ferredoxin] + H2O = (2E)-4-hydroxy-3-methylbut-2-enyl diphosphate + 2 reduced [2Fe-2S]-[ferredoxin] + 2 H(+). The protein operates within isoprenoid biosynthesis; dimethylallyl diphosphate biosynthesis; dimethylallyl diphosphate from (2E)-4-hydroxy-3-methylbutenyl diphosphate: step 1/1. It functions in the pathway isoprenoid biosynthesis; isopentenyl diphosphate biosynthesis via DXP pathway; isopentenyl diphosphate from 1-deoxy-D-xylulose 5-phosphate: step 6/6. Catalyzes the conversion of 1-hydroxy-2-methyl-2-(E)-butenyl 4-diphosphate (HMBPP) into a mixture of isopentenyl diphosphate (IPP) and dimethylallyl diphosphate (DMAPP). Acts in the terminal step of the DOXP/MEP pathway for isoprenoid precursor biosynthesis. This is 4-hydroxy-3-methylbut-2-enyl diphosphate reductase from Prochlorococcus marinus (strain SARG / CCMP1375 / SS120).